We begin with the raw amino-acid sequence, 207 residues long: MANVSLFKQDGTKNGDVELNADIFGIEPNNDVVFEAVVMQRASMRQGTHAVKNRSAVRGGGRKPWRQKGTGRARQGSIRSPQWRGGGIVFGPTPRSYAYSIPKKMRRLALKSVLSQKVLDESLVVVDEFKFETPKTKDFAQSLGNLNVDKKALLVLEEDNESAVLAARNLSNVKIVEPEGINVLDIMNSDKLVITQKALSQVEEALA.

Residues 45–78 are disordered; the sequence is RQGTHAVKNRSAVRGGGRKPWRQKGTGRARQGSI. The segment covering 60 to 71 has biased composition (basic residues); it reads GGRKPWRQKGTG.

The protein belongs to the universal ribosomal protein uL4 family. Part of the 50S ribosomal subunit.

Its function is as follows. One of the primary rRNA binding proteins, this protein initially binds near the 5'-end of the 23S rRNA. It is important during the early stages of 50S assembly. It makes multiple contacts with different domains of the 23S rRNA in the assembled 50S subunit and ribosome. Forms part of the polypeptide exit tunnel. This is Large ribosomal subunit protein uL4 from Pediococcus pentosaceus (strain ATCC 25745 / CCUG 21536 / LMG 10740 / 183-1w).